A 135-amino-acid chain; its full sequence is Mini-ribonuclease 3 (135 aa).

Asp17 is an active-site residue.

The protein belongs to the MrnC RNase family. Homodimer. Mg(2+) is required as a cofactor.

The protein resides in the cytoplasm. Involved in correct processing of both the 5' and 3' ends of 23S rRNA precursor. Processes 30S rRNA precursor transcript even in absence of ribonuclease 3 (Rnc); Rnc processes 30S rRNA into smaller rRNA precursors. The sequence is that of Mini-ribonuclease 3 from Bacillus cereus (strain ATCC 14579 / DSM 31 / CCUG 7414 / JCM 2152 / NBRC 15305 / NCIMB 9373 / NCTC 2599 / NRRL B-3711).